The primary structure comprises 930 residues: Kinesin-like protein KIN-7J (930 aa).

A Kinesin motor domain is found at 9–273 (KILVSVRVRP…TLGTVIRKLR (265 aa)). ATP is bound at residue 95 to 102 (GQTSSGKT). Disordered regions lie at residues 449–569 (LKNS…IGTD) and 655–686 (MQTKASPGRPNTSSISFDSGSSTSIDTRSLKD). Residues 459 to 468 (SVEAQESQES) show a composition bias toward low complexity. Composition is skewed to basic and acidic residues over residues 473–482 (EQMKNEERKM) and 533–558 (AKLDEDATSRDKWESKQQQEADKDCN). Low complexity predominate over residues 666-681 (TSSISFDSGSSTSIDT). A Glycyl lysine isopeptide (Lys-Gly) (interchain with G-Cter in ubiquitin) cross-link involves residue Lys805.

The protein belongs to the TRAFAC class myosin-kinesin ATPase superfamily. Kinesin family. KIN-7 subfamily.

The sequence is that of Kinesin-like protein KIN-7J from Arabidopsis thaliana (Mouse-ear cress).